The chain runs to 98 residues: Large ribosomal subunit protein uL23 (98 aa).

It belongs to the universal ribosomal protein uL23 family. Part of the 50S ribosomal subunit. Contacts protein L29, and trigger factor when it is bound to the ribosome.

One of the early assembly proteins it binds 23S rRNA. One of the proteins that surrounds the polypeptide exit tunnel on the outside of the ribosome. Forms the main docking site for trigger factor binding to the ribosome. This Streptococcus gordonii (strain Challis / ATCC 35105 / BCRC 15272 / CH1 / DL1 / V288) protein is Large ribosomal subunit protein uL23.